A 600-amino-acid polypeptide reads, in one-letter code: Aspartate--tRNA(Asp/Asn) ligase (600 aa).

Residue Glu181 coordinates L-aspartate. The tract at residues 205–208 is aspartate; sequence QQYK. Arg227 serves as a coordination point for L-aspartate. ATP-binding positions include 227-229 and Gln236; that span reads RDE. His455 is an L-aspartate binding site. Glu490 is a binding site for ATP. Residue Arg497 participates in L-aspartate binding. An ATP-binding site is contributed by 542–545; the sequence is GLDR.

It belongs to the class-II aminoacyl-tRNA synthetase family. Type 1 subfamily. In terms of assembly, homodimer.

Its subcellular location is the cytoplasm. The enzyme catalyses tRNA(Asx) + L-aspartate + ATP = L-aspartyl-tRNA(Asx) + AMP + diphosphate. Functionally, aspartyl-tRNA synthetase with relaxed tRNA specificity since it is able to aspartylate not only its cognate tRNA(Asp) but also tRNA(Asn). Reaction proceeds in two steps: L-aspartate is first activated by ATP to form Asp-AMP and then transferred to the acceptor end of tRNA(Asp/Asn). The polypeptide is Aspartate--tRNA(Asp/Asn) ligase (Methylacidiphilum infernorum (isolate V4) (Methylokorus infernorum (strain V4))).